We begin with the raw amino-acid sequence, 795 residues long: Probable alpha,alpha-trehalose-phosphate synthase [UDP-forming] 4 (795 aa).

Positions 4–469 are glycosyltransferase; it reads PRLLVVSMSL…WADDFMKLTL (466 aa).

It in the N-terminal section; belongs to the glycosyltransferase 20 family. In the C-terminal section; belongs to the trehalose phosphatase family.

It catalyses the reaction D-glucose 6-phosphate + UDP-alpha-D-glucose = alpha,alpha-trehalose 6-phosphate + UDP + H(+). This chain is Probable alpha,alpha-trehalose-phosphate synthase [UDP-forming] 4 (TPS4), found in Arabidopsis thaliana (Mouse-ear cress).